The chain runs to 198 residues: uncharacterized protein (198 aa).

It is found in the cytoplasm. This is an uncharacterized protein from Saccharomyces cerevisiae (strain ATCC 204508 / S288c) (Baker's yeast).